Consider the following 896-residue polypeptide: Echinoderm microtubule-associated protein-like 3 (896 aa).

An N-acetylmethionine modification is found at Met-1. Positions 16-43 (LQSLSQRLRVQEQEMELVKAALAEALRL) form a coiled coil. The tract at residues 50–209 (PSSLQGSGTP…GGPGSRRSNY (160 aa)) is disordered. Over residues 77–88 (TPSLVSRGTQTE) the composition is skewed to polar residues. Residues 134-145 (PGPPGILRPLQP) are compositionally biased toward pro residues. The segment covering 154 to 163 (RNSSSSSSPS) has biased composition (low complexity). Over residues 174–189 (AISSANLLVRSGSTES) the composition is skewed to polar residues. A phosphoserine mark is found at Ser-176, Ser-198, and Ser-204. 13 WD repeats span residues 234–286 (RSLE…LYRP), 295–344 (GGGQ…IWDS), 350–392 (LQEI…VWDC), 398–434 (LAEI…FWNW), 448–487 (RKQG…TWGR), 504–543 (YGIV…QWGP), 549–584 (QEAE…LRGD), 589–626 (FSPV…LWDG), 629–667 (HALA…VLDT), 674–709 (SDVI…IYSV), 716–755 (SSRF…YWDV), 765–823 (RYES…LFQY), and 830–869 (APSR…QWRV). The tract at residues 876–896 (GPAPATPSRTPSLSPASSLDV) is disordered. Positions 877 to 896 (PAPATPSRTPSLSPASSLDV) are enriched in low complexity. A Phosphothreonine; by CDK1 modification is found at Thr-881. Ser-883 bears the Phosphoserine mark.

The protein belongs to the WD repeat EMAP family. As to quaternary structure, homotrimer; self-association is mediated by the N-terminal coiled coil. Interacts with EML2 but not with EML1. Interacts (phosphorylated at Thr-881) with TUBG1, HAUS1, HAUS2, HAUS3, HAUS4, HAUS5, HAUS6, HAUS7 and HAUS8. Phosphorylation at Thr-881 during mitosis is required for interaction with TUBG1, HAUS1, HAUS2, HAUS3, HAUS4, HAUS5, HAUS6, HAUS7 and HAUS8 and their recruitment to spindle microtubules.

It localises to the cytoplasm. The protein resides in the cytoskeleton. Its subcellular location is the nucleus. The protein localises to the midbody. It is found in the spindle. Functionally, regulates mitotic spindle assembly, microtubule (MT)-kinetochore attachment and chromosome separation via recruitment of HAUS augmin-like complex and TUBG1 to the existing MTs and promoting MT-based MT nucleation. Required for proper alignnment of chromosomes during metaphase. In Homo sapiens (Human), this protein is Echinoderm microtubule-associated protein-like 3 (EML3).